Consider the following 213-residue polypeptide: Ras-related protein Rab-25 (213 aa).

GTP contacts are provided by Ser-21, Gly-24, Lys-25, Thr-26, Asn-27, Ser-38, His-39, Thr-43, and Thr-44. Thr-26 contributes to the Mg(2+) binding site. 2 consecutive short sequence motifs (switch) follow at residues Asn-35–Phe-49 and Asp-67–Gly-84. Residues Thr-44 and Asp-67 each coordinate Mg(2+). GTP-binding residues include Gly-70, Asn-125, Lys-126, Asp-128, Ala-156, and Leu-157. 2 S-geranylgeranyl cysteine lipidation sites follow: Cys-209 and Cys-210. The residue at position 210 (Cys-210) is a Cysteine methyl ester. Residues Ile-211–Leu-213 constitute a propeptide, removed in mature form.

The protein belongs to the small GTPase superfamily. Rab family. As to quaternary structure, interacts (GTP-bound form) with RAB11FIP1, RAB11FIP2, RAB11FIP3 and RAB11FIP4. Interacts (via the hypervariable C-terminal region) with ITGB1 (via the cytoplasmic region); the interaction is GTP-dependent. Interacts with ITGAV. Associates with the integrin alpha-V/beta-1 heterodimer. Interacts with VPS33B. The cofactor is Mg(2+).

Its subcellular location is the cell membrane. It localises to the cell projection. It is found in the pseudopodium membrane. The protein localises to the cytoplasmic vesicle. It carries out the reaction GTP + H2O = GDP + phosphate + H(+). Regulated by guanine nucleotide exchange factors (GEFs) which promote the exchange of bound GDP for free GTP. Regulated by GTPase activating proteins (GAPs) which increase the GTP hydrolysis activity. Inhibited by GDP dissociation inhibitors (GDIs) which prevent Rab-GDP dissociation. In terms of biological role, the small GTPases Rab are key regulators of intracellular membrane trafficking, from the formation of transport vesicles to their fusion with membranes. Rabs cycle between an inactive GDP-bound form and an active GTP-bound form that is able to recruit to membranes different set of downstream effectors directly responsible for vesicle formation, movement, tethering and fusion. RAB25 regulates epithelial cell differentiation, proliferation and survival, thereby playing key roles in tumorigenesis. Promotes invasive migration of cells in which it functions to localize and maintain integrin alpha-V/beta-1 at the tips of extending pseudopodia. Involved in the regulation of epithelial morphogenesis through the control of CLDN4 expression and localization at tight junctions. May selectively regulate the apical recycling pathway. Together with MYO5B regulates transcytosis. This is Ras-related protein Rab-25 from Mus musculus (Mouse).